Reading from the N-terminus, the 457-residue chain is Cysteine desulfurase (457 aa).

A127, T128, Q235, S255, and H257 together coordinate pyridoxal 5'-phosphate. K258 carries the N6-(pyridoxal phosphate)lysine modification. Position 295 (T295) interacts with pyridoxal 5'-phosphate. Catalysis depends on C381, which acts as the Cysteine persulfide intermediate. C381 is a [2Fe-2S] cluster binding site. Position 381 (C381) interacts with Zn(2+). At C381 the chain carries Cysteine persulfide.

The protein belongs to the class-V pyridoxal-phosphate-dependent aminotransferase family. NifS/IscS subfamily. In terms of assembly, homodimer. Component of the mitochondrial core iron-sulfur cluster (ISC) complex composed of NFS1, LYRM4, NDUFAB1, ISCU, FXN, and FDX2; this complex is a heterohexamer containing two copies of each monomer. Component of cyteine desulfurase complex composed of NFS1, LYRM4 and NDUFAB1; this complex contributes to the activation of cysteine desulfurase activity and NFS1 stabilization. Interacts (homodimer form) with ISCU (D-state); each monomer interacts with the C-terminal regions of each NFS1 monomer. Interacts with HSPA9. Interacts (via homodimer form) with FDX2. Interacts (via homodimer form) with FXN. Interacts with LYRM4. Component of a complex composed of FXN, NFS1, LYRM4 and ISCU. Monomer. Homodimer. Oligomer. Interacts with ISCU. Component of the cysteine desulfurase complex composed of NFS1 and LYRM4; this complex contributes to the activation of cysteine desulfurase activity. Interacts with MOCS3. Requires pyridoxal 5'-phosphate as cofactor. N-gluconoylated. In terms of processing, cysteine persulfide intermediate is reduced by thiol-containing molecules like glutathione and L-cysteine. Persulfide reduction is a rate-limiting step of cysteine desulfurase catalytic cycle.

It is found in the mitochondrion. Its subcellular location is the cytoplasm. The protein resides in the nucleus. It localises to the cytoskeleton. The protein localises to the microtubule organizing center. It is found in the centrosome. The enzyme catalyses (sulfur carrier)-H + L-cysteine = (sulfur carrier)-SH + L-alanine. It catalyses the reaction L-cysteinyl-[cysteine desulfurase] + L-cysteine = S-sulfanyl-L-cysteinyl-[cysteine desulfurase] + L-alanine. Active only in complex with LYRM4. In terms of biological role, cysteine desulfurase, of the core iron-sulfur cluster (ISC) assembly complex, that catalyzes the desulfuration of L-cysteine to L-alanine, as component of the cysteine desulfurase complex leading to the formation of a cysteine persulfide intermediate at the active site cysteine residue and participates in the [2Fe-2S] clusters assembly on the scaffolding protein ISCU. The persulfide is then transferred on the flexible Cys loop from the catalytic site of NFS1 to the surface of NFS1. After the NFS1-linked persulfide sulfur is transferred to one of the conserved Cys residues of the scaffold, a reaction assisted by FXN. The core iron-sulfur cluster (ISC) assembly complex is involved in the de novo synthesis of a [2Fe-2S] cluster, the first step of the mitochondrial iron-sulfur protein biogenesis. This process is initiated by the cysteine desulfurase complex (NFS1:LYRM4:NDUFAB1) that produces persulfide which is delivered on the scaffold protein ISCU in a FXN-dependent manner. Then this complex is stabilized by FDX2 which provides reducing equivalents to accomplish the [2Fe-2S] cluster assembly. Finally, the [2Fe-2S] cluster is transferred from ISCU to chaperone proteins, including HSCB, HSPA9 and GLRX5. Functionally, may catalyze the desulfuration of L-cysteine to L-alanine as component of the cysteine desulfurase complex (NFS1:LYRM4), leading to the formation of a cysteine persulfide intermediate. Acts as a sulfur donor for MOCS3 by transferring the sulfur of the cysteine persulfide intermediate on MOCS3. This chain is Cysteine desulfurase, found in Pongo abelii (Sumatran orangutan).